A 76-amino-acid polypeptide reads, in one-letter code: DNA-directed RNA polymerase subunit omega (76 aa).

The protein belongs to the RNA polymerase subunit omega family. As to quaternary structure, in cyanobacteria the RNAP catalytic core is composed of 2 alpha, 1 beta, 1 beta', 1 gamma and 1 omega subunit. When a sigma factor is associated with the core the holoenzyme is formed, which can initiate transcription.

It carries out the reaction RNA(n) + a ribonucleoside 5'-triphosphate = RNA(n+1) + diphosphate. In terms of biological role, promotes RNA polymerase assembly. Latches the N- and C-terminal regions of the beta' subunit thereby facilitating its interaction with the beta and alpha subunits. This is DNA-directed RNA polymerase subunit omega from Synechococcus elongatus (strain ATCC 33912 / PCC 7942 / FACHB-805) (Anacystis nidulans R2).